The primary structure comprises 96 residues: Small ribosomal subunit protein bS18 (96 aa).

The protein belongs to the bacterial ribosomal protein bS18 family. As to quaternary structure, part of the 30S ribosomal subunit. Forms a tight heterodimer with protein bS6.

Binds as a heterodimer with protein bS6 to the central domain of the 16S rRNA, where it helps stabilize the platform of the 30S subunit. The chain is Small ribosomal subunit protein bS18 from Borreliella afzelii (strain PKo) (Borrelia afzelii).